The primary structure comprises 274 residues: Diaminopimelate epimerase (274 aa).

Positions 11, 44, and 64 each coordinate substrate. The active-site Proton donor is Cys73. Residues 74 to 75 (GN), Asn157, Asn190, and 208 to 209 (ER) each bind substrate. Cys217 (proton acceptor) is an active-site residue. 218–219 (GS) lines the substrate pocket.

This sequence belongs to the diaminopimelate epimerase family. Homodimer.

Its subcellular location is the cytoplasm. The enzyme catalyses (2S,6S)-2,6-diaminopimelate = meso-2,6-diaminopimelate. Its pathway is amino-acid biosynthesis; L-lysine biosynthesis via DAP pathway; DL-2,6-diaminopimelate from LL-2,6-diaminopimelate: step 1/1. In terms of biological role, catalyzes the stereoinversion of LL-2,6-diaminopimelate (L,L-DAP) to meso-diaminopimelate (meso-DAP), a precursor of L-lysine and an essential component of the bacterial peptidoglycan. The polypeptide is Diaminopimelate epimerase (Pectobacterium carotovorum subsp. carotovorum (strain PC1)).